We begin with the raw amino-acid sequence, 233 residues long: DnaA regulatory inactivator Hda (233 aa).

The protein belongs to the DnaA family. HdA subfamily. In terms of assembly, the active form seems to be an ADP-bound monomer. Forms the RIDA complex (regulatory inactivation of DnaA) of ATP-DnaA, ADP-Hda and the DNA-loaded beta sliding clamp (dnaN).

Its function is as follows. Mediates the interaction of DNA replication initiator protein DnaA with DNA polymerase subunit beta sliding clamp (dnaN). Stimulates hydrolysis of ATP-DnaA to ADP-DnaA, rendering DnaA inactive for reinitiation, a process called regulatory inhibition of DnaA or RIDA. The polypeptide is DnaA regulatory inactivator Hda (Photorhabdus laumondii subsp. laumondii (strain DSM 15139 / CIP 105565 / TT01) (Photorhabdus luminescens subsp. laumondii)).